The following is a 639-amino-acid chain: Putative oxidoreductase UacF (639 aa).

4Fe-4S ferredoxin-type domains lie at 3–32 (KFIA…ENWP), 47–77 (KGQA…TFQS), 78–107 (DSVQ…MVDT), 110–139 (QKCD…LMDD), and 201–235 (QQAT…YIRL). [4Fe-4S] cluster is bound by residues C12, C15, C18, C22, C56, C59, C64, C68, C87, C90, C93, C97, C112, C115, C125, C129, C210, C213, C219, and C223.

The cofactor is [4Fe-4S] cluster.

Involved in formate-dependent uric acid degradation under microaerobic and anaerobic conditions. May reduce the enzymes necessary for uric acid degradation. This chain is Putative oxidoreductase UacF, found in Escherichia coli (strain K12).